The sequence spans 119 residues: uncharacterized protein (119 aa).

Positions 1–29 (MKKVGEEEIKQEENEKEKIVKKLNESDVK) form a coiled coil.

This is an uncharacterized protein from Acidianus sp. F28 (AFV-2).